Consider the following 123-residue polypeptide: Probable ketoamine kinase in tonB 3'region (123 aa).

Aspartate 26 acts as the Proton acceptor in catalysis.

This sequence belongs to the fructosamine kinase family.

In terms of biological role, ketoamine kinase that phosphorylates ketoamines on the third carbon of the sugar moiety to generate ketoamine 3-phosphate. This is Probable ketoamine kinase in tonB 3'region from Klebsiella pneumoniae.